Reading from the N-terminus, the 661-residue chain is Pseudouridylate synthase 7 homolog (661 aa).

Met-1 is modified (N-acetylmethionine). The segment at 1–97 is disordered; it reads MEMTEMTGVS…GLSEECEEEE (97 aa). Ser-10 is modified (phosphoserine). A compositionally biased stretch (polar residues) spans 36–52; it reads SECSLTKGQDGLQNDFL. A compositionally biased stretch (acidic residues) spans 77–97; sequence QLEDEEEEEEDGLSEECEEEE. At Ser-127 the chain carries Phosphoserine. The active-site Nucleophile is the Asp-294. The TRUD domain occupies 370 to 580; that stretch reads GFINYYGMQR…SGAYRKIIIR (211 aa). Thr-610 carries the phosphothreonine modification.

It belongs to the pseudouridine synthase TruD family. Interacts with SIRT1.

It is found in the nucleus. It carries out the reaction a uridine in tRNA = a pseudouridine in tRNA. The enzyme catalyses uridine(13) in tRNA = pseudouridine(13) in tRNA. It catalyses the reaction a uridine in mRNA = a pseudouridine in mRNA. Its function is as follows. Pseudouridylate synthase that catalyzes pseudouridylation of RNAs. Acts as a regulator of protein synthesis in embryonic stem cells by mediating pseudouridylation of RNA fragments derived from tRNAs (tRFs): pseudouridylated tRFs inhibit translation by targeting the translation initiation complex. Also catalyzes pseudouridylation of mRNAs: mediates pseudouridylation of mRNAs with the consensus sequence 5'-UGUAG-3'. Acts as a regulator of pre-mRNA splicing by mediating pseudouridylation of pre-mRNAs at locations associated with alternatively spliced regions. Pseudouridylation of pre-mRNAs near splice sites directly regulates mRNA splicing and mRNA 3'-end processing. In addition to mRNAs and tRNAs, binds other types of RNAs, such as snRNAs, Y RNAs and vault RNAs, suggesting that it can catalyze pseudouridylation of many RNA types. The protein is Pseudouridylate synthase 7 homolog of Homo sapiens (Human).